A 3970-amino-acid chain; its full sequence is Polyketide synthase-nonribosomal peptide synthetase hybrid himA (3970 aa).

The region spanning 8–443 (SEPIAIIGSA…GTNSHAILES (436 aa)) is the Ketosynthase family 3 (KS3) domain. Residues Cys-181, His-320, and His-363 each act as for beta-ketoacyl synthase activity in the active site. The tract at residues 561–876 (IFTGQGAQWP…PYAGLLHRGR (316 aa)) is malonyl-CoA:ACP transacylase (MAT) domain. The tract at residues 949–1083 (HELLGVRTSD…GMVHLHLGEP (135 aa)) is N-terminal hotdog fold. The tract at residues 949-1253 (HELLGVRTSD…GLTVVALSST (305 aa)) is dehydratase (DH) domain. The PKS/mFAS DH domain occupies 949–1256 (HELLGVRTSD…VVALSSTGPA (308 aa)). His-981 acts as the Proton acceptor; for dehydratase activity in catalysis. The tract at residues 1098-1256 (GLNRVDLDEF…VVALSSTGPA (159 aa)) is C-terminal hotdog fold. The active-site Proton donor; for dehydratase activity is Asp-1158. The tract at residues 2060 to 2234 (TYVMIGLTGE…ASVLDIGMVS (175 aa)) is ketoreductase (KR) domain. One can recognise a Carrier 1 domain in the interval 2342 to 2419 (AIAAILTESF…TLAEEVAKEL (78 aa)). Ser-2379 carries the O-(pantetheine 4'-phosphoryl)serine modification. Positions 2420 to 2482 (FEDRSTSAPP…NDDSDPTAQC (63 aa)) are disordered. The segment covering 2445–2466 (GSSTDPSSNSDSKSGFDGFSSD) has biased composition (low complexity). The segment covering 2467-2477 (DSSDIANDDSD) has biased composition (acidic residues). The tract at residues 2487–2919 (PMSLSQARMW…ATTPTERVAT (433 aa)) is condensation (C) domain. Positions 2974-3381 (SYKAMSDRVN…LGDIANAILK (408 aa)) are adenylation (A) domain. The segment at 3466–3495 (RPLPASGDEDGDEDTETETGADADADAGAD) is disordered. Residues 3472 to 3492 (GDEDGDEDTETETGADADADA) show a composition bias toward acidic residues. Residues 3496–3574 (TTLSDIHSKL…AIAERILRGV (79 aa)) enclose the Carrier 2 domain. Ser-3534 bears the O-(pantetheine 4'-phosphoryl)serine mark. The tract at residues 3633 to 3866 (LTGATGFLGR…FIRVETVAEE (234 aa)) is reductase (R) domain.

In the C-terminal section; belongs to the NRP synthetase family.

The protein operates within secondary metabolite biosynthesis. In terms of biological role, polyketide synthase-nonribosomal peptide synthetase hybrid; part of the him gene cluster that mediates the biosynthesis of himeic acid A, a ubiquitin-activating enzyme (E1) inhibitor. First, himA, together with the trans-enoyl reductase himH, catalyzes the formation of apolyketide chain, which is then condensed with leucine by the NRPS activity of himA. Dieckmann cyclization and release from himA gives a tetramic acid intermediate as the product of himA PKS-NRPS. HimG then catalyzes alpha-oxidation of the tetramic acid ring, with a subsequent rearrangement to yield apyrone intermediate. Two terminal methyl groups of polyketide and amide side chains are oxidized to carboxylic acids by himC cytochrome P450 monooxygenase to form himeic acid A. Himeic acid A is further converted to himeic acids B and C during culture growth. No gene responsible for pyrone to pyridone conversion was found in the him gene cluster and himeic acid A is non-enzymatically converted to himeic acid C by the incorporation of an ammonium nitrogen atom in a pH5 buffer, and to himeic acid B at a conversion ratio of 50% during incubation in MeOH for 5 days. The sequence is that of Polyketide synthase-nonribosomal peptide synthetase hybrid himA from Aspergillus japonicus.